Here is a 149-residue protein sequence, read N- to C-terminus: D-aminoacyl-tRNA deacylase (149 aa).

The Gly-cisPro motif, important for rejection of L-amino acids signature appears at 137–138 (GP).

Belongs to the DTD family. Homodimer.

The protein resides in the cytoplasm. The catalysed reaction is glycyl-tRNA(Ala) + H2O = tRNA(Ala) + glycine + H(+). It carries out the reaction a D-aminoacyl-tRNA + H2O = a tRNA + a D-alpha-amino acid + H(+). An aminoacyl-tRNA editing enzyme that deacylates mischarged D-aminoacyl-tRNAs. Also deacylates mischarged glycyl-tRNA(Ala), protecting cells against glycine mischarging by AlaRS. Acts via tRNA-based rather than protein-based catalysis; rejects L-amino acids rather than detecting D-amino acids in the active site. By recycling D-aminoacyl-tRNA to D-amino acids and free tRNA molecules, this enzyme counteracts the toxicity associated with the formation of D-aminoacyl-tRNA entities in vivo and helps enforce protein L-homochirality. The sequence is that of D-aminoacyl-tRNA deacylase from Herminiimonas arsenicoxydans.